The sequence spans 392 residues: ER-bound oxygenase mpaB (392 aa).

Residues 1–21 lie on the Lumenal side of the membrane; it reads MSLPLPPALSELARALPYSRT. Residues 22-41 form a helical membrane-spanning segment; sequence QWLPIFVGFLIGYPILIRAL. Residues 42–392 lie on the Cytoplasmic side of the membrane; that stretch reads RYKRHGEMKK…WSKYHATTND (351 aa). Residues 352 to 376 form a disordered region; it reads DLGQKKGPQGDPGNDEGIKDLKDGE. Positions 367 to 376 are enriched in basic and acidic residues; it reads EGIKDLKDGE.

Belongs to the mpaB oxygenase family.

Its subcellular location is the endoplasmic reticulum membrane. It carries out the reaction 4-farnesyl-3,5-dihydroxy-6-methylphthalide + AH2 + 2 O2 = (4E,8E)-10-(4,6-dihydroxy-7-methyl-3-oxo-1,3-dihydro-2-benzofuran-5-yl)-4,8-dimethyldeca-4,8-dienoate + acetone + A + H2O + H(+). The protein operates within secondary metabolite biosynthesis; terpenoid biosynthesis. ER-bound oxygenase; part of the gene cluster that mediates the biosynthesis of mycophenolic acid (MPA), the first isolated antibiotic natural product in the world obtained from a culture of Penicillium brevicompactum in 1893. MpaB catalyzes the oxidative cleavage the C19-C20 double bond in farnesyl-DHMP (FDHMP) to yield FDHMP-3C via a mycophenolic aldehyde intermediate. The first step of the pathway is the synthesis of 5-methylorsellinic acid (5MOA) by the cytosolic polyketide synthase mpaC. 5MOA is then converted to the phthalide compound 5,7-dihydroxy-4,6-dimethylphthalide (DHMP) by the endoplasmic reticulum-bound cytochrome P450 monooxygenase mpaDE. MpaDE first catalyzes hydroxylation of 5-MOA to 4,6-dihydroxy-2-(hydroxymethyl)-3-methylbenzoic acid (DHMB). MpaDE then acts as a lactone synthase that catalyzes the ring closure to convert DHMB into DHMP. The next step is the prenylation of DHMP by the Golgi apparatus-associated prenyltransferase mpaA to yield farnesyl-DHMP (FDHMP). The ER-bound oxygenase mpaB then mediates the oxidative cleavage the C19-C20 double bond in FDHMP to yield FDHMP-3C via a mycophenolic aldehyde intermediate. The O-methyltransferase mpaG catalyzes the methylation of FDHMP-3C to yield MFDHMP-3C. After the cytosolic methylation of FDHMP-3C, MFDHMP-3C enters into peroxisomes probably via free diffusion due to its low molecular weight. Upon a peroxisomal CoA ligation reaction, catalyzed by a beta-oxidation component enzyme acyl-CoA ligase ACL891, MFDHMP-3C-CoA would then be restricted to peroxisomes for the following beta-oxidation pathway steps. The peroxisomal beta-oxidation machinery than converts MFDHMP-3C-CoA into MPA_CoA, via a beta-oxidation chain-shortening process. Finally mpaH acts as a peroxisomal acyl-CoA hydrolase with high substrate specificity toward MPA-CoA to release the final product MPA. This chain is ER-bound oxygenase mpaB, found in Penicillium brevicompactum.